A 477-amino-acid chain; its full sequence is tRNA-2-methylthio-N(6)-dimethylallyladenosine synthase (477 aa).

Residues 9–129 enclose the MTTase N-terminal domain; the sequence is RKLHIKSYGC…LPQLLARAKT (121 aa). Cysteine 18, cysteine 54, cysteine 92, cysteine 170, cysteine 174, and cysteine 177 together coordinate [4Fe-4S] cluster. Residues 156–386 enclose the Radical SAM core domain; that stretch reads RSRGISAFVT…QLQNLIDSQQ (231 aa). The region spanning 391 to 453 is the TRAM domain; it reads RTALGRTIDV…RYSLFGTLAS (63 aa). Positions 454 to 477 are disordered; sequence KPTSGEPSNHAATGGAQFQTTAGA. A compositionally biased stretch (low complexity) spans 464–477; the sequence is AATGGAQFQTTAGA.

It belongs to the methylthiotransferase family. MiaB subfamily. Monomer. Requires [4Fe-4S] cluster as cofactor.

Its subcellular location is the cytoplasm. The enzyme catalyses N(6)-dimethylallyladenosine(37) in tRNA + (sulfur carrier)-SH + AH2 + 2 S-adenosyl-L-methionine = 2-methylsulfanyl-N(6)-dimethylallyladenosine(37) in tRNA + (sulfur carrier)-H + 5'-deoxyadenosine + L-methionine + A + S-adenosyl-L-homocysteine + 2 H(+). In terms of biological role, catalyzes the methylthiolation of N6-(dimethylallyl)adenosine (i(6)A), leading to the formation of 2-methylthio-N6-(dimethylallyl)adenosine (ms(2)i(6)A) at position 37 in tRNAs that read codons beginning with uridine. This is tRNA-2-methylthio-N(6)-dimethylallyladenosine synthase from Nitrobacter winogradskyi (strain ATCC 25391 / DSM 10237 / CIP 104748 / NCIMB 11846 / Nb-255).